A 373-amino-acid chain; its full sequence is MASVTLKNVCKAYGDVLISKNVDLEIQEGEFVVFVGPSGCGKSTLLRCIAGLEDITSGDLYIGEQRMNDVEPSKRGVGMVFQSYALYPHLNLYDNMSFGLKLSKADKSEIKKRVDHAAEILQLSHLLDRQPKALSGGQRQRVAIGRTLVSQPNVFLLDEPLSNLDAALRVQMRSEITKLQRKLGCTMIYVTHDQVEAMTMADKIVVLDAGFVSQVGKPLELYHYPQNRFVAGFIGSPKMNFMSVFIEGVEKDRVQVQLSNGTTFWIPVDGTTVTRGERMSLGIRPEHLVEAEHGDAKIEGKVMIVEKLGNETQVYMNLKGSDSDVIYRQPDTLDVETGDTLTIGIPAHRCHLFHSDGRACRRLHKEKGVDLPA.

Residues 4–234 (VTLKNVCKAY…PQNRFVAGFI (231 aa)) enclose the ABC transporter domain. ATP is bound at residue 36–43 (GPSGCGKS).

It belongs to the ABC transporter superfamily. Maltooligosaccharide importer (TC 3.A.1.1.1) family. The complex is composed of two ATP-binding proteins (MalK), two transmembrane proteins (MalG and MalK) and a solute-binding protein (MalE).

The protein localises to the cell inner membrane. The catalysed reaction is D-maltose(out) + ATP + H2O = D-maltose(in) + ADP + phosphate + H(+). In terms of biological role, part of the ABC transporter complex MalEFGK involved in maltose/maltodextrin import. Responsible for energy coupling to the transport system. The chain is Maltose/maltodextrin import ATP-binding protein MalK from Vibrio cholerae serotype O1 (strain ATCC 39315 / El Tor Inaba N16961).